Reading from the N-terminus, the 191-residue chain is CASP-like protein 2U3 (191 aa).

The Cytoplasmic segment spans residues 1-25 (MGAYDGAEAPRAAPASTAANSRPSR). Residues 26–46 (LLLLHSLLLRLVAVVVSILVI) form a helical membrane-spanning segment. Residues 47-68 (AVMVHAKQRVMIFKAEWDNSKA) are Extracellular-facing. The chain crosses the membrane as a helical span at residues 69 to 89 (FVALVAISAICLGYSFLQFIL). Residues 90–114 (SAFHLCSKSWKSPTKCWAWMNFIAD) are Cytoplasmic-facing. The chain crosses the membrane as a helical span at residues 115-135 (QILTYAMLGAAAAAAELAYIA). Over 136-157 (KNGSSRAQWQPICSTFNTFCTR) the chain is Extracellular. Asparagine 137 is a glycosylation site (N-linked (GlcNAc...) asparagine). Residues 158-178 (AGASIILSFIAVLALANSSAI) form a helical membrane-spanning segment. Over 179 to 191 (SAYHLFRRPSSSV) the chain is Cytoplasmic.

This sequence belongs to the Casparian strip membrane proteins (CASP) family. Homodimer and heterodimers.

It localises to the cell membrane. This Selaginella moellendorffii (Spikemoss) protein is CASP-like protein 2U3.